Reading from the N-terminus, the 347-residue chain is NADH-ubiquinone oxidoreductase chain 2 (347 aa).

The next 10 helical transmembrane spans lie at 13–33, 55–75, 96–116, 122–142, 151–171, 178–198, 199–219, 237–257, 277–297, and 326–346; these read VFTG…WLGL, AAIK…MAIL, LMIV…FWVP, VPLT…ISIM, TNIL…GGLN, ILAY…PYNP, NITI…FLIL, LTWL…LPPL, IAPT…ARLI, and LPTL…ILSI.

The protein belongs to the complex I subunit 2 family. As to quaternary structure, core subunit of respiratory chain NADH dehydrogenase (Complex I) which is composed of 45 different subunits. Interacts with TMEM242.

It localises to the mitochondrion inner membrane. It carries out the reaction a ubiquinone + NADH + 5 H(+)(in) = a ubiquinol + NAD(+) + 4 H(+)(out). Core subunit of the mitochondrial membrane respiratory chain NADH dehydrogenase (Complex I) which catalyzes electron transfer from NADH through the respiratory chain, using ubiquinone as an electron acceptor. Essential for the catalytic activity and assembly of complex I. This is NADH-ubiquinone oxidoreductase chain 2 from Pongo pygmaeus (Bornean orangutan).